Reading from the N-terminus, the 130-residue chain is Flagellar assembly factor FliW (130 aa).

The protein belongs to the FliW family. As to quaternary structure, interacts with translational regulator CsrA and flagellin(s).

The protein resides in the cytoplasm. In terms of biological role, acts as an anti-CsrA protein, binds CsrA and prevents it from repressing translation of its target genes, one of which is flagellin. Binds to flagellin and participates in the assembly of the flagellum. The polypeptide is Flagellar assembly factor FliW (Borrelia duttonii (strain Ly)).